The following is a 144-amino-acid chain: 3-dehydroquinate dehydratase (144 aa).

Tyr22 functions as the Proton acceptor in the catalytic mechanism. Asn74, His80, and Asp87 together coordinate substrate. His100 functions as the Proton donor in the catalytic mechanism. Substrate contacts are provided by residues 101–102 and Arg111; that span reads LS.

It belongs to the type-II 3-dehydroquinase family. In terms of assembly, homododecamer.

It carries out the reaction 3-dehydroquinate = 3-dehydroshikimate + H2O. It functions in the pathway metabolic intermediate biosynthesis; chorismate biosynthesis; chorismate from D-erythrose 4-phosphate and phosphoenolpyruvate: step 3/7. Its function is as follows. Catalyzes a trans-dehydration via an enolate intermediate. This is 3-dehydroquinate dehydratase from Clostridium perfringens (strain ATCC 13124 / DSM 756 / JCM 1290 / NCIMB 6125 / NCTC 8237 / Type A).